The primary structure comprises 424 residues: Tyrosine--tRNA ligase (424 aa).

An L-tyrosine-binding site is contributed by Tyr37. Positions Pro42–His51 match the 'HIGH' region motif. L-tyrosine is bound by residues Tyr175 and Gln179. The short motif at Lys235 to Thr239 is the 'KMSKS' region element. Lys238 provides a ligand contact to ATP. The region spanning Ala357–Gly414 is the S4 RNA-binding domain.

Belongs to the class-I aminoacyl-tRNA synthetase family. TyrS type 1 subfamily. As to quaternary structure, homodimer.

It localises to the cytoplasm. The enzyme catalyses tRNA(Tyr) + L-tyrosine + ATP = L-tyrosyl-tRNA(Tyr) + AMP + diphosphate + H(+). In terms of biological role, catalyzes the attachment of tyrosine to tRNA(Tyr) in a two-step reaction: tyrosine is first activated by ATP to form Tyr-AMP and then transferred to the acceptor end of tRNA(Tyr). The chain is Tyrosine--tRNA ligase from Salmonella enteritidis PT4 (strain P125109).